Consider the following 292-residue polypeptide: Protein-L-isoaspartate O-methyltransferase (292 aa).

The tract at residues 1–76 (MTEKKRFPLS…AAAPSSNERA (76 aa)) is disordered. Polar residues predominate over residues 28 to 48 (NRSSTSGKVATPQTATQNASQ). Serine 138 is an active-site residue.

It belongs to the methyltransferase superfamily. L-isoaspartyl/D-aspartyl protein methyltransferase family.

It is found in the cytoplasm. It catalyses the reaction [protein]-L-isoaspartate + S-adenosyl-L-methionine = [protein]-L-isoaspartate alpha-methyl ester + S-adenosyl-L-homocysteine. Its function is as follows. Catalyzes the methyl esterification of L-isoaspartyl residues in peptides and proteins that result from spontaneous decomposition of normal L-aspartyl and L-asparaginyl residues. It plays a role in the repair and/or degradation of damaged proteins. This is Protein-L-isoaspartate O-methyltransferase from Janthinobacterium sp. (strain Marseille) (Minibacterium massiliensis).